The sequence spans 406 residues: Phosphatidylinositol 5-phosphate 4-kinase type-2 alpha (406 aa).

The residue at position 2 (alanine 2) is an N-acetylalanine. Threonine 3 bears the Phosphothreonine mark. At serine 14 the chain carries Phosphoserine. A PIPK domain is found at 33-405; it reads ASDPLLSVLM…RFLDFIGHIL (373 aa). A required for interaction with PIP5K1A region spans residues 59–65; that stretch reads VMLMPDD. Residues lysine 89 and lysine 145 each carry the N6-acetyllysine modification. A disordered region spans residues 288–329; that stretch reads QEEVECEENDGEEEGESDGTHPVGTPPDSPGNTLNSSPPLAP. The segment covering 289 to 304 has biased composition (acidic residues); it reads EEVECEENDGEEEGES.

As to quaternary structure, homodimer. Interacts with PIP4K2B; the interaction may regulate localization to the nucleus. Probably interacts with PIP5K1A; the interaction inhibits PIP5K1A kinase activity. Post-translationally, phosphorylated in tyrosines. Phosphorylation is induced by light and increases kinase activity.

It localises to the cell membrane. The protein localises to the nucleus. Its subcellular location is the lysosome. The protein resides in the cytoplasm. It is found in the photoreceptor inner segment. It localises to the cell projection. The protein localises to the cilium. Its subcellular location is the photoreceptor outer segment. It carries out the reaction a 1,2-diacyl-sn-glycero-3-phospho-(1D-myo-inositol-5-phosphate) + ATP = a 1,2-diacyl-sn-glycero-3-phospho-(1D-myo-inositol-4,5-bisphosphate) + ADP + H(+). The enzyme catalyses 1,2-dihexadecanoyl-sn-glycero-3-phospho-(1D-myo-inositol-5-phosphate) + ATP = 1,2-dihexadecanoyl-sn-glycero-3-phospho-(1D-myo-inositol-4,5-bisphosphate) + ADP + H(+). It catalyses the reaction 1,2-dihexadecanoyl-sn-glycero-3-phospho-(1D-myo-inositol-5-phosphate) + GTP = 1,2-dihexadecanoyl-sn-glycero-3-phospho-(1D-myo-inositol-4,5-bisphosphate) + GDP + H(+). Its activity is regulated as follows. In rod outer segments, activated by light. Functionally, catalyzes the phosphorylation of phosphatidylinositol 5-phosphate (PtdIns5P) on the fourth hydroxyl of the myo-inositol ring, to form phosphatidylinositol 4,5-bisphosphate (PtdIns(4,5)P2). Has both ATP- and GTP-dependent kinase activities. May exert its function by regulating the levels of PtdIns5P, which functions in the cytosol by increasing AKT activity and in the nucleus signals through ING2. May regulate the pool of cytosolic PtdIns5P in response to the activation of tyrosine phosphorylation. May be involved in thrombopoiesis, and the terminal maturation of megakaryocytes and regulation of their size. May negatively regulate insulin-stimulated glucose uptake by lowering the levels of PtdIns5P. In Sus scrofa (Pig), this protein is Phosphatidylinositol 5-phosphate 4-kinase type-2 alpha (PIP4K2A).